We begin with the raw amino-acid sequence, 2177 residues long: Mediator of RNA polymerase II transcription subunit 12 (2177 aa).

Residues 12 to 35 are disordered; sequence RPLKRPRLGPPDVYPQDPKQKEDE. An N6-acetyllysine modification is found at Lys80. The residue at position 166 (Tyr166) is a Phosphotyrosine. 4 disordered regions span residues 323–344, 627–669, 690–717, and 1241–1266; these read QSTS…TPST, GAPG…MDID, TMPC…PKEK, and TVTG…QGGR. Residues Ser635, Ser665, Ser698, and Ser700 each carry the phosphoserine modification. Residues 702–717 show a composition bias toward basic and acidic residues; it reads EKPDVEKEVKPPPKEK. Ser1258 and Ser1269 each carry phosphoserine. Residues 1394–1411 are compositionally biased toward low complexity; it reads AETGSSSGSTASNMPSSS. Disordered stretches follow at residues 1394–1415, 1450–1474, and 1738–1829; these read AETG…KTKP, ELEK…KSMS, and YLEP…PGSI. Composition is skewed to basic and acidic residues over residues 1450–1469 and 1758–1771; these read ELEK…DRQK and EPEK…KTDK. The tract at residues 1616 to 2051 is interaction with CTNNB1 and GLI3; the sequence is LAKKLQKELG…VRSTAILPEQ (436 aa). Basic residues predominate over residues 1784 to 1793; that stretch reads KKSTKGKKRS. Residue Lys1798 is modified to N6-acetyllysine. At Arg1899 the chain carries Asymmetric dimethylarginine; alternate. Arg1899 bears the Omega-N-methylarginine; alternate mark. Residue Arg1910 is modified to Omega-N-methylarginine. 2 disordered regions span residues 1919–1938 and 1967–1989; these read QGML…SYGL and SYSS…DPTR. The segment covering 1927–1938 has biased composition (polar residues); it reads VHQMTPSSSYGL. Over residues 1967–1980 the composition is skewed to low complexity; the sequence is SYSSQPYQSTHPST. Asymmetric dimethylarginine occurs at positions 1994 and 2015. 3 stretches are compositionally biased toward low complexity: residues 2115–2125, 2133–2149, and 2158–2171; these read QHQQQQQQQAA, SQPQ…QQQQ, and LQQQ…QPST. 2 disordered regions span residues 2115–2149 and 2158–2177; these read QHQQ…QQQQ and LQQQ…FGRY.

The protein belongs to the Mediator complex subunit 12 family. Component of the Mediator complex, which is composed of MED1, MED4, MED6, MED7, MED8, MED9, MED10, MED11, MED12, MED13, MED13L, MED14, MED15, MED16, MED17, MED18, MED19, MED20, MED21, MED22, MED23, MED24, MED25, MED26, MED27, MED29, MED30, MED31, CCNC, CDK8 and CDC2L6/CDK11. The MED12, MED13, CCNC and CDK8 subunits form a distinct module termed the CDK8 module. Mediator containing the CDK8 module is less active than Mediator lacking this module in supporting transcriptional activation. Individual preparations of the Mediator complex lacking one or more distinct subunits have been variously termed ARC, CRSP, DRIP, PC2, SMCC and TRAP. Also interacts with CTNNB1 and GLI3. In terms of tissue distribution, ubiquitous.

It is found in the nucleus. Functionally, component of the Mediator complex, a coactivator involved in the regulated transcription of nearly all RNA polymerase II-dependent genes. Mediator functions as a bridge to convey information from gene-specific regulatory proteins to the basal RNA polymerase II transcription machinery. Mediator is recruited to promoters by direct interactions with regulatory proteins and serves as a scaffold for the assembly of a functional pre-initiation complex with RNA polymerase II and the general transcription factors. This subunit may specifically regulate transcription of targets of the Wnt signaling pathway and SHH signaling pathway. This Homo sapiens (Human) protein is Mediator of RNA polymerase II transcription subunit 12 (MED12).